A 360-amino-acid polypeptide reads, in one-letter code: Deoxyhypusine hydroxylase (360 aa).

HEAT-like PBS-type repeat units follow at residues Leu56–Asp82, Val89–Asp115, and Glu213–Asp245. Residues His58, Glu59, His91, and Glu92 each contribute to the Fe cation site. Positions 252, 253, 285, and 286 each coordinate Fe cation.

The protein belongs to the deoxyhypusine hydroxylase family. Fe(2+) is required as a cofactor.

The protein localises to the cytoplasm. Its subcellular location is the nucleus. The catalysed reaction is [eIF5A protein]-deoxyhypusine + AH2 + O2 = [eIF5A protein]-hypusine + A + H2O. It participates in protein modification; eIF5A hypusination. Its function is as follows. Catalyzes the hydroxylation of the N(6)-(4-aminobutyl)-L-lysine intermediate to form hypusine, an essential post-translational modification only found in mature eIF-5A factor. The chain is Deoxyhypusine hydroxylase from Mycosarcoma maydis (Corn smut fungus).